Consider the following 447-residue polypeptide: GTPase Der (447 aa).

EngA-type G domains are found at residues 4–165 (KIIT…SIKE) and 180–357 (LQIV…KIWN). Residues 10–17 (GRPNVGKS), 57–61 (DTPGL), 119–122 (NKCE), 186–193 (GRPNAGKS), 233–237 (DTAGL), and 298–301 (NKWD) contribute to the GTP site. Positions 358 to 443 (KKITTGKLNE…PIRFTYVKNK (86 aa)) constitute a KH-like domain.

Belongs to the TRAFAC class TrmE-Era-EngA-EngB-Septin-like GTPase superfamily. EngA (Der) GTPase family. As to quaternary structure, associates with the 50S ribosomal subunit.

GTPase that plays an essential role in the late steps of ribosome biogenesis. The polypeptide is GTPase Der (Rickettsia typhi (strain ATCC VR-144 / Wilmington)).